The primary structure comprises 1199 residues: DNA-directed RNA polymerase subunit beta' (1199 aa).

Residues Cys60, Cys62, Cys75, and Cys78 each contribute to the Zn(2+) site. Residues Asp449, Asp451, and Asp453 each coordinate Mg(2+). Positions 818, 892, 899, and 902 each coordinate Zn(2+).

It belongs to the RNA polymerase beta' chain family. In terms of assembly, RNAP is composed of a core of 2 alpha, a beta and a beta' subunit. The core is associated with a delta subunit, and at least one of epsilon or omega. When a sigma factor is associated with the core the holoenzyme is formed, which can initiate transcription. Mg(2+) serves as cofactor. Requires Zn(2+) as cofactor.

The catalysed reaction is RNA(n) + a ribonucleoside 5'-triphosphate = RNA(n+1) + diphosphate. DNA-dependent RNA polymerase catalyzes the transcription of DNA into RNA using the four ribonucleoside triphosphates as substrates. The chain is DNA-directed RNA polymerase subunit beta' from Bacillus subtilis (strain 168).